Consider the following 343-residue polypeptide: Methionine import ATP-binding protein MetN 2 (343 aa).

Positions 2–241 (IEFKDVTKTF…PQQAVTKRFV (240 aa)) constitute an ABC transporter domain. ATP is bound at residue 38–45 (GYSGAGKS).

This sequence belongs to the ABC transporter superfamily. Methionine importer (TC 3.A.1.24) family. In terms of assembly, the complex is composed of two ATP-binding proteins (MetN), two transmembrane proteins (MetI) and a solute-binding protein (MetQ).

The protein localises to the cell membrane. It catalyses the reaction L-methionine(out) + ATP + H2O = L-methionine(in) + ADP + phosphate + H(+). The catalysed reaction is D-methionine(out) + ATP + H2O = D-methionine(in) + ADP + phosphate + H(+). Part of the ABC transporter complex MetNIQ involved in methionine import. Responsible for energy coupling to the transport system. The chain is Methionine import ATP-binding protein MetN 2 from Lactiplantibacillus plantarum (strain ATCC BAA-793 / NCIMB 8826 / WCFS1) (Lactobacillus plantarum).